Reading from the N-terminus, the 406-residue chain is Probable UDP-arabinose 4-epimerase 3 (406 aa).

The Cytoplasmic portion of the chain corresponds to 1–26 (MIPLNRRASQTRGGMEYFDARRKPHN). The chain crosses the membrane as a helical; Signal-anchor for type II membrane protein span at residues 27 to 44 (VGKVIAALVLTTLCIFIL). The Lumenal segment spans residues 45–406 (KQSPGFGGSS…KSHPRGYGSN (362 aa)). 65–96 (HVLVTGGAGYIGSHASLRLLKDNYRVTIVDNL) serves as a coordination point for NAD(+). The active-site Proton acceptor is the Tyr-213.

Belongs to the NAD(P)-dependent epimerase/dehydratase family. The cofactor is NAD(+).

The protein localises to the golgi apparatus. It localises to the golgi stack membrane. The catalysed reaction is UDP-beta-L-arabinopyranose = UDP-alpha-D-xylose. It participates in nucleotide-sugar biosynthesis; UDP-L-arabinose biosynthesis; UDP-L-arabinose from UDP-alpha-D-xylose: step 1/1. Its pathway is cell wall biogenesis; cell wall polysaccharide biosynthesis. The polypeptide is Probable UDP-arabinose 4-epimerase 3 (UEL-3) (Oryza sativa subsp. japonica (Rice)).